The following is a 441-amino-acid chain: MKLALLLPWACCCLCGSALATGFLYPFSAAALQQHGYPEPGAGSPGSGYASRRHWCHHTVTRTVSCQVQNGSETVVQRVYQSCRWPGPCANLVSYRTLIRPTYRVSYRTVTVLEWRCCPGFTGSNCDEECMNCTRLSDMSERLTTLEAKVLLLEAAERPSSPDNDLPAPESTPPTWNEDFLPDAIPLAHPVPRQRRPTGPAGPPGQTGPPGPAGPPGSKGDRGQTGEKGPAGPPGLLGPPGPRGLPGEMGRPGPPGPPGPAGNPGPSPNSPQGALYSLQPPTDKDNGDSRLASAIVDTVLAGVPGPRGPPGPPGPPGPRGPPGPPGTPGSQGLAGERGTVGPSGEPGVKGEEGEKAATAEGEGVQQLREALKILAERVLILEHMIGIHDPLASPEGGSGQDAALRANLKMKRGGAQPDGVLAALLGPDPGQKSVDQASSRK.

Positions 1–20 (MKLALLLPWACCCLCGSALA) are cleaved as a signal peptide. The EMI domain maps to 52 to 128 (RRHWCHHTVT…PGFTGSNCDE (77 aa)). Disulfide bonds link C56–C118, C83–C89, and C117–C126. N70 is a glycosylation site (N-linked (GlcNAc...) asparagine). N132 carries an N-linked (GlcNAc...) asparagine glycan. Disordered stretches follow at residues 156–362 (AERP…AEGE) and 390–441 (PLAS…SSRK). 2 Collagen-like domains span residues 199-267 (GPAG…PGPS) and 302-355 (GVPG…EGEK). Composition is skewed to pro residues over residues 200–215 (PAGPPGQTGPPGPAGP), 231–243 (AGPPGLLGPPGPR), 252–269 (PGPPGPPGPAGNPGPSPN), and 306–327 (PRGPPGPPGPPGPRGPPGPPGT). Residues 348 to 357 (VKGEEGEKAA) show a composition bias toward basic and acidic residues.

As to quaternary structure, homotrimer or heterotrimer. Hydroxylated on proline residues.

It is found in the secreted. Its subcellular location is the extracellular space. The protein localises to the extracellular matrix. This is Collagen alpha-1(XXVI) chain (COL26A1) from Homo sapiens (Human).